Consider the following 132-residue polypeptide: Small heat shock protein hspL (132 aa).

The sHSP domain occupies 15 to 131; sequence TFTNFVSAPV…VKMSNNNKVE (117 aa).

Belongs to the small heat shock protein (HSP20) family.

The polypeptide is Small heat shock protein hspL (hspL) (Dictyostelium discoideum (Social amoeba)).